We begin with the raw amino-acid sequence, 1396 residues long: DNA-directed RNA polymerase subunit beta' (1396 aa).

4 residues coordinate Zn(2+): Cys-71, Cys-73, Cys-86, and Cys-89. Positions 462, 464, and 466 each coordinate Mg(2+). Zn(2+) is bound by residues Cys-810, Cys-884, Cys-891, and Cys-894. The segment covering 1372–1382 (DEQLAQQREDA) has biased composition (basic and acidic residues). Residues 1372–1396 (DEQLAQQREDAMEPLPAEIALSDAE) are disordered.

It belongs to the RNA polymerase beta' chain family. In terms of assembly, the RNAP catalytic core consists of 2 alpha, 1 beta, 1 beta' and 1 omega subunit. When a sigma factor is associated with the core the holoenzyme is formed, which can initiate transcription. Mg(2+) serves as cofactor. Zn(2+) is required as a cofactor.

It catalyses the reaction RNA(n) + a ribonucleoside 5'-triphosphate = RNA(n+1) + diphosphate. Functionally, DNA-dependent RNA polymerase catalyzes the transcription of DNA into RNA using the four ribonucleoside triphosphates as substrates. The sequence is that of DNA-directed RNA polymerase subunit beta' from Caulobacter vibrioides (strain ATCC 19089 / CIP 103742 / CB 15) (Caulobacter crescentus).